A 431-amino-acid chain; its full sequence is Enolase (431 aa).

Gln166 serves as a coordination point for (2R)-2-phosphoglycerate. Catalysis depends on Glu208, which acts as the Proton donor. Residues Asp245, Glu288, and Asp315 each contribute to the Mg(2+) site. Residues Lys340, Arg369, Ser370, and Lys391 each coordinate (2R)-2-phosphoglycerate. Lys340 serves as the catalytic Proton acceptor.

This sequence belongs to the enolase family. Requires Mg(2+) as cofactor.

It is found in the cytoplasm. Its subcellular location is the secreted. It localises to the cell surface. The catalysed reaction is (2R)-2-phosphoglycerate = phosphoenolpyruvate + H2O. Its pathway is carbohydrate degradation; glycolysis; pyruvate from D-glyceraldehyde 3-phosphate: step 4/5. Catalyzes the reversible conversion of 2-phosphoglycerate (2-PG) into phosphoenolpyruvate (PEP). It is essential for the degradation of carbohydrates via glycolysis. This is Enolase from Clostridium botulinum (strain 657 / Type Ba4).